The chain runs to 1828 residues: Protein TIC 214 (1828 aa).

6 helical membrane passes run 18 to 38 (IINS…FSIG), 64 to 84 (FITG…HLAM), 87 to 107 (PYTI…WKNH), 124 to 144 (FSIQ…HFVL), 172 to 192 (VGWL…LFWI), and 222 to 242 (VNIF…SPIL). The segment covering 270 to 279 (SEAKETKQEQ) has biased composition (basic and acidic residues). 4 disordered regions span residues 270 to 301 (SEAK…PNKL), 618 to 637 (DLQQ…HAIR), 741 to 763 (EFKT…EDKK), and 1533 to 1571 (KEEF…RQSK). The span at 1550 to 1562 (KDVEKDYAKSDIK) shows a compositional bias: basic and acidic residues.

The protein belongs to the TIC214 family. In terms of assembly, part of the Tic complex.

It is found in the plastid. It localises to the chloroplast inner membrane. Involved in protein precursor import into chloroplasts. May be part of an intermediate translocation complex acting as a protein-conducting channel at the inner envelope. In Calycanthus floridus var. glaucus (Eastern sweetshrub), this protein is Protein TIC 214.